A 342-amino-acid chain; its full sequence is Isopentenyl-diphosphate delta-isomerase (342 aa).

Substrate is bound at residue 6–7; sequence RK. FMN-binding positions include Ser-63, 64–66, Ser-94, and Asn-122; that span reads SMT. 94–96 contacts substrate; that stretch reads SMR. Gln-157 is a substrate binding site. Glu-158 contributes to the Mg(2+) binding site. Residues Lys-189, Thr-219, 269 to 271, and 290 to 291 each bind FMN; these read GLK and AG.

The protein belongs to the IPP isomerase type 2 family. In terms of assembly, homooctamer. Dimer of tetramers. It depends on FMN as a cofactor. NADPH serves as cofactor. Requires Mg(2+) as cofactor.

The protein resides in the cytoplasm. It carries out the reaction isopentenyl diphosphate = dimethylallyl diphosphate. Involved in the biosynthesis of isoprenoids. Catalyzes the 1,3-allylic rearrangement of the homoallylic substrate isopentenyl (IPP) to its allylic isomer, dimethylallyl diphosphate (DMAPP). This Rickettsia bellii (strain RML369-C) protein is Isopentenyl-diphosphate delta-isomerase.